The sequence spans 217 residues: Ras-related protein Rab-39A (217 aa).

The GTP site is built by S17, G20, K21, S22, C23, and T44. S22 serves as a coordination point for Mg(2+). Residues 39–47 (PACDPTVGV) form a switch-I region. Mg(2+) contacts are provided by T44 and D68. 6 residues coordinate GTP: G71, H127, K128, D130, A158, and K159. Residues 71-87 (GQERFRSITRSYYRNSV) are switch-II. Residues C215 and C217 are each lipidated (S-geranylgeranyl cysteine). At C217 the chain carries Cysteine methyl ester.

Belongs to the small GTPase superfamily. Rab family. As to quaternary structure, interacts (GDP-bound) with C9orf72; C9orf72 acts as a GEF for RAB39A. Interacts (GTP-bound) with HOPS complex components VPS39 and VPS41, and STX17; interaction between HOPS components and RAB39A contributes to obtaining a functional HOPS complex that promotes membrane fusion driven by STX17-SNAP29-VAMP8. Interacts with BECN1. Probably associates with the PI3K (PI3KC3/PI3K-III/class III phosphatidylinositol 3-kinase) complex. Interacts with UACA. Interacts with isoform a of RASSF1. Does not interact with isoform c of RASSF1. Mg(2+) is required as a cofactor. Prenylated. Prenylation is required for association with cellular membranes.

The protein resides in the cell membrane. Its subcellular location is the cytoplasmic vesicle. It localises to the phagosome membrane. The protein localises to the late endosome membrane. It is found in the lysosome membrane. The protein resides in the autolysosome membrane. It carries out the reaction GTP + H2O = GDP + phosphate + H(+). Regulated by guanine nucleotide exchange factors (GEFs) including c9Orf72, which promote the exchange of bound GDP for free GTP. Regulated by GTPase activating proteins (GAPs) which increase the GTP hydrolysis activity. Inhibited by GDP dissociation inhibitors (GDIs). Its function is as follows. The small GTPases Rab are key regulators of intracellular membrane trafficking, from the formation of transport vesicles to their fusion with membranes. Rabs cycle between an inactive GDP-bound form and an active GTP-bound form that is able to recruit to membranes different sets of downstream effectors directly responsible for vesicle formation, movement, tethering and fusion. RAB39A regulates autophagosome-lysosome fusion via recruitment of the HOPS endosomal tethering complex onto lysosomes; this process involves lysosomal RAB39A and autophagosomal RAB2A recruitment of HOPS subcomplexes VPS41-VPS16-VPS18-VPS33A and VPS39-VPS11, respectively, which assemble into a functional complex to mediate membrane tethering and SNAREs-driven membrane fusion. Also negatively regulates lipopolysaccharide (LPS)-induced autophagosome formation in macrophages, possibly by implicating PI3K. Promotes the delivery of MHC-I molecules from the ER to phagosomes and the generation of peptide-loaded MHC-I complexes in phagosomes, thus enhancing antigen cross-presentation by dendritic cells. Plays a role in the maturation and acidification of phagosomes that engulf pathogens, such as S.aureus and M.tuberculosis. Plays a role in the fusion of phagosomes with lysosomes. May be involved in multiple neurite formation. This is Ras-related protein Rab-39A from Mus musculus (Mouse).